Reading from the N-terminus, the 155-residue chain is Small ribosomal subunit protein uS7 (155 aa).

It belongs to the universal ribosomal protein uS7 family. Part of the 30S ribosomal subunit. Contacts proteins S9 and S11.

Its function is as follows. One of the primary rRNA binding proteins, it binds directly to 16S rRNA where it nucleates assembly of the head domain of the 30S subunit. Is located at the subunit interface close to the decoding center, probably blocks exit of the E-site tRNA. The sequence is that of Small ribosomal subunit protein uS7 from Xanthomonas oryzae pv. oryzae (strain MAFF 311018).